Reading from the N-terminus, the 346-residue chain is DNA polymerase IV 2 (346 aa).

The UmuC domain maps to 9–191 (ILHVDLDQFL…RTVEALWGVG (183 aa)). Mg(2+) is bound by residues D13 and D111. Residue E112 is part of the active site.

The protein belongs to the DNA polymerase type-Y family. Monomer. The cofactor is Mg(2+).

The protein localises to the cytoplasm. It carries out the reaction DNA(n) + a 2'-deoxyribonucleoside 5'-triphosphate = DNA(n+1) + diphosphate. Its function is as follows. Poorly processive, error-prone DNA polymerase involved in untargeted mutagenesis. Copies undamaged DNA at stalled replication forks, which arise in vivo from mismatched or misaligned primer ends. These misaligned primers can be extended by PolIV. Exhibits no 3'-5' exonuclease (proofreading) activity. May be involved in translesional synthesis, in conjunction with the beta clamp from PolIII. The chain is DNA polymerase IV 2 (dinB2) from Mycobacterium bovis (strain ATCC BAA-935 / AF2122/97).